A 4061-amino-acid polypeptide reads, in one-letter code: Hybrid PKS-NRPS synthetase tasS (4061 aa).

The Ketosynthase family 3 (KS3) domain occupies 7–472 (QEPIAVIGMA…GTNAHAIIEG (466 aa)). Residue Cys-180 is part of the active site. The malonyl-CoA:ACP transacylase (MAT) domain stretch occupies residues 586–911 (VFTGQGAQWP…RQKNDVEELL (326 aa)). The segment at 977 to 1113 (HPLLGRRCVE…ATVNVTFHEP (137 aa)) is N-terminal hotdog fold. A dehydratase (DH) domain region spans residues 977–1280 (HPLLGRRCVE…VRVQPFSVAG (304 aa)). The PKS/mFAS DH domain maps to 977-1282 (HPLLGRRCVE…VQPFSVAGPQ (306 aa)). The active-site Proton acceptor; for dehydratase activity is His-1010. The tract at residues 1128–1282 (LANAEPQRLY…VQPFSVAGPQ (155 aa)) is C-terminal hotdog fold. Residue Asp-1188 is the Proton donor; for dehydratase activity of the active site. The tract at residues 1425–1619 (LDRFYEEGFE…GFNGVETHTP (195 aa)) is methyltransferase (MT) domain. The segment at 2153–2325 (TYFLLGLSGE…GVVGSDMAIG (173 aa)) is ketoreductase (KR) domain. Residues 2437 to 2516 (EAIKVVFDTF…LLVEEAVDKL (80 aa)) enclose the Carrier 1 domain. Ser-2475 carries the post-translational modification O-(pantetheine 4'-phosphoryl)serine. The tract at residues 2527–2617 (EHGGEPDLTQ…QKHQEQTSQS (91 aa)) is disordered. Low complexity predominate over residues 2556-2576 (TSAASSSDTGSDSSPTSNSVS). Residues 2577-2592 (ETQTGTPLETPMSTTE) show a composition bias toward polar residues. Residues 2632–3077 (QMTFGQNRFW…ELATWDTESE (446 aa)) form a condensation (C) domain region. The adenylation (A) (KR) domain stretch occupies residues 3103–3510 (QVIADHPDAV…RGYLTVEGRI (408 aa)). One can recognise a Carrier 2 domain in the interval 3633 to 3712 (QNLTATERTL…SMAALLDDGV (80 aa)). Residue Ser-3672 is modified to O-(pantetheine 4'-phosphoryl)serine. The interval 3813–3969 (DIDVVLHCAA…LSPLEDAVEA (157 aa)) is reductase (RED) domain.

The protein in the C-terminal section; belongs to the NRP synthetase family.

The catalysed reaction is (2S,4S)-4-hydroxy-4-methylglutamate + 8 malonyl-CoA + 3 S-adenosyl-L-methionine + ATP + 8 NADPH + 11 H(+) = (2S)-3-[(2S)-3,5-dioxo-4-[(2E,4R,6R,8E,10E,12E)-4,6,12-trimethyltetradeca-2,8,10,12-tetraenoyl]pyrrolidin-2-yl]-2-hydroxy-2-methylpropanoate + AMP + 3 S-adenosyl-L-homocysteine + 8 CO2 + diphosphate + 8 NADP(+) + 8 CoA + 6 H2O. It functions in the pathway secondary metabolite biosynthesis. Its function is as follows. Hybrid PKS-NRPS synthetase; part of the gene cluster that mediates the biosynthesis of the tetramic acids Sch210971 and Sch210972, potential anti-HIV fungal natural product that contain a decalin core. The PKS module of tasS together with the enoylreductase tasC catalyze the formation of the polyketide unit which is then conjugated to 4-hydroxyl-4-methyl glutamate (HMG) by the condensation domain of the tasS NRPS module. One unique structural feature of Sch210971 and Sch210972 is the tetramic acid motif proposed to be derived from the non-proteinogenic amino acid HMG, by a Dieckmann-type condensation catalyzed by the reductase domain of tasS. The aldolase tasA catalyzes the aldol condensation of 2 molecules of pyruvic acid to yield the intermediate 4-hydroxyl-4-methyl-2-oxoglutarate (HMOG), which can then be stereoselectively transaminated, may be by tasG, to form HMG. The Diels-Alderase tas3 then uses the Dieckmann product of tasS as substrate and catalyzes the Diels-Alder cycloaddition to form the decalin ring of Sch210971 and Sch210972. This chain is Hybrid PKS-NRPS synthetase tasS, found in Hapsidospora irregularis.